The chain runs to 121 residues: RING-box protein HRT1 (121 aa).

Residues 1–31 (MSNEVDRMDVDEDESQNIAQSSNQSAPVETK) form a disordered region. Ser15 carries the post-translational modification Phosphoserine. The span at 16 to 26 (QNIAQSSNQSA) shows a compositional bias: low complexity. The Zn(2+) site is built by Cys55, Cys58, Cys66, Cys69, Cys81, Cys88, His90, His93, His95, Cys107, and Asp110. An RING-type zinc finger spans residues 55–111 (CAICRNHIMEPCIECQPKAMTDTDNECVAAWGVCNHAFHLHCINKWIKTRDACPLDN).

This sequence belongs to the RING-box family. Component of multiple cullin-RING ligases (CRLs) composed of 4 subunits: the RING protein HRT1, a cullin, a linker protein, and one of many alternative substrate receptors. Component of SCF E3 ubiquitin ligase complexes containing the cullin CDC53, the linker protein SKP1/CBF3D, and substrate receptors containing F-box motifs like DAS1 or GRR1. Component of RTT101(MMS1) E3 ubiquitin ligase complexes containing the cullin RTT101, the linker protein MMS1, and substrate receptors belonging to a protein family described as DCAF (DDB1- and CUL4-associated factor) like MMS22. Component of CRL3 E3 ubiquitin ligase complexes containing the cullin CUL3, the linker protein ELC1, and substrate receptors containing SOCS-box motifs like ELA1. Interacts with CDC53, CUL3, RTT101, CDC4 and CDC34/UBC3.

The protein localises to the cytoplasm. Its subcellular location is the nucleus. The protein operates within protein modification; protein ubiquitination. Core component of multiple cullin-RING-based E3 ubiquitin-protein ligase complexes (CRLs), which mediate the ubiquitination of target proteins. Recruits the E2 ubiquitin-conjugating enzyme CDC34/UBC3 to the complex and brings it into close proximity to the substrate. Also stimulates CDC34/UBC3 autoubiquitination and promotes the neddylation of CDC53 and RTT101. Component of the SCF(CDC4) ubiquitin ligase required for ubiquitination of the cyclin-dependent kinase inhibitor SIC1 and for the G1-to-S phase transition. Component of the RTT101(MMS1-MMS22) ubiquitin ligase that promotes fork progression through damaged DNA or natural pause sites. Component of the CRL3(ELA1) ubiquitin ligase required for ubiquitination of RPB1, the largest subunit of RNA polymerase II (Pol II), which targets Pol II for proteasomal degradation in DNA-damaged cells. The protein is RING-box protein HRT1 (HRT1) of Saccharomyces cerevisiae (strain ATCC 204508 / S288c) (Baker's yeast).